The chain runs to 351 residues: MIPEERLDQITQRFQYLEAAMADGASGSDIAALAKEYSDLRPVVEQIAAWRQLCADMDEARAMLSDPDMKALAEEELPLLKARLPEAEQALQLALLPKDAADARPAMLEIRPGTGGDEAALFAGDLLRMYQRYAEARGWKLELIELQETELGGIKEVVARISGENVFARLKYESGVHRVQRVPETESGGRIHTSAATVAVLPEAQDVDIQIDPGDIRIDTMRSSGAGGQHVNTTDSAVRITHLPSGIVVTSSEKSQHRNREIAMQVLKTRLYDLERQRLDRERSASRSAQVGTGDRSERIRTYNFPQGRMTDHRINLTLYKLDAVMQGDLDEVIDALAADGQARMLAEMGQ.

An N5-methylglutamine modification is found at glutamine 229.

Belongs to the prokaryotic/mitochondrial release factor family. Methylated by PrmC. Methylation increases the termination efficiency of RF1.

Its subcellular location is the cytoplasm. Its function is as follows. Peptide chain release factor 1 directs the termination of translation in response to the peptide chain termination codons UAG and UAA. In Ruegeria pomeroyi (strain ATCC 700808 / DSM 15171 / DSS-3) (Silicibacter pomeroyi), this protein is Peptide chain release factor 1.